We begin with the raw amino-acid sequence, 410 residues long: Probable ATP-dependent RNA helicase MG308 (410 aa).

The region spanning 26 to 179 (VFKLWPFQNI…KKQVINTKVI (154 aa)) is the Helicase ATP-binding domain. An ATP-binding site is contributed by 39 to 46 (AETGSGKT). A DEID box motif is present at residues 126–129 (DEID). Residues 190–357 (LVKHFVVHLN…DLKFLTENNQ (168 aa)) form the Helicase C-terminal domain.

The protein belongs to the DEAD box helicase family.

The catalysed reaction is ATP + H2O = ADP + phosphate + H(+). The polypeptide is Probable ATP-dependent RNA helicase MG308 (Mycoplasma genitalium (strain ATCC 33530 / DSM 19775 / NCTC 10195 / G37) (Mycoplasmoides genitalium)).